A 236-amino-acid chain; its full sequence is Dense granule protein 7 (236 aa).

Positions 1 to 26 are cleaved as a signal peptide; the sequence is MARHAIFSALCVLGLVAAALPQFATA. The tract at residues 45–106 is disordered; the sequence is DGQAPVDSLR…EVHFRKRGVR (62 aa). The segment covering 70-80 has biased composition (polar residues); it reads TTSMDKASVES. The segment at 147 to 236 is required for dimerization, interactions with liposomes and liposome tubulation; that stretch reads AVGMGASYFA…SGEDGEDARQ (90 aa). The chain crosses the membrane as a helical span at residues 181–201; the sequence is VGTVLGFAALAAAAAFLGMGL. Residues 208-236 are disordered; it reads FSPRKNRSRQPALEQEVPESGEDGEDARQ. Residue N213 is glycosylated (N-linked (GlcNAc...) asparagine). A compositionally biased stretch (acidic residues) spans 223–236; that stretch reads EVPESGEDGEDARQ.

It belongs to the Gra7 family. As to quaternary structure, homodimer. Can form higher order homooligomers in a lipid-stimulated manner. Component of a complex at least composed of ROP18, GRA7 and ROP2. Interacts with ROP5. Interacts with ROP18 in the absence of ROP5. Interacts with mouse IRGA6/IIGP1 in GTP-dependent manner; the interaction results in faster turnover of the GTP-activated IRGA6/IIGP1 oligomer. Interacts with mouse TRAF6 (via N-terminal RING domain); the interaction plays a role in GRA7-induced pro-inflammatory cytokine production in mouse macrophages.

It localises to the secreted. The protein resides in the parasitophorous vacuole lumen. The protein localises to the parasitophorous vacuole membrane. Its subcellular location is the cytoplasm. It is found in the host cytoplasm. It localises to the cytoplasmic vesicle. The protein resides in the secretory vesicle. Functionally, binds lipid bilayers, sequesters host endocytic organelles in the parasitophorous vacuole space, and causes their deformation and remodeling. Plays a role in nutrient acquisition from the host. In complex with ROP18, targets immunity-related GTPases (IRGs) to prevent IRG-mediated parasite killing by mouse cells. Important component within a kinase complex, contributing to phosphorylation of mouse IRGA6/IIGP1, an immunity-related GTPase that protects mice from infection by certain intracellular pathogens, by Toxoplasma gondii ROP5 and ROP18. Induces pro-inflammatory cytokine production in host macrophages. Activates host pro-inflammatory signaling pathways in a MyD88-dependent manner. Triggers generation of reactive oxygen species (ROS) in host cells. Activates MAPK pathway in host cells. Activates host NF-kappa-B signaling pathway by interacting with TRAF6 and modulating the 'Lys-63'-linked polyubiquitination of TRAF6. The protein is Dense granule protein 7 of Toxoplasma gondii.